A 260-amino-acid chain; its full sequence is MLAVLSPAKSLDYESPLTTSRFSEPALMHESALLIEQLRQFAPADIASLMHLSDKLAGLNVARYAQWEPVATPQNARPAVLAFNGDVYSGLAAQDFDDADLDVAQQHIRILSGLYGLLRPLDLLQPYRLEMGTKLGNPRGKDLYAFWGDIITGHLNQALTEQGDNVLLNLASDEYFKSVNVKRLAGRVITPVFQDEKNGKYKIISFYAKKARGLMARYLVKERISKPEQLLDFTVAGYGYCPELSTENKLVFRRPEDLSQ.

It belongs to the UPF0246 family.

The polypeptide is UPF0246 protein Tola_0968 (Tolumonas auensis (strain DSM 9187 / NBRC 110442 / TA 4)).